The chain runs to 489 residues: Threonine/serine exporter (489 aa).

10 consecutive transmembrane segments (helical) span residues 151-171, 174-194, 206-226, 233-253, 268-288, 314-334, 335-355, 356-376, 381-401, and 420-440; these read GFPV…VLLG, WQVS…TSFL, VVGG…ALQF, SQII…VQSL, FFET…GIQL, IIAG…EWSS, VIIA…FVVY, LGPV…GGLL, LIPP…GLAI, and IAVA…GEWI. A disordered region spans residues 464–489; the sequence is FQEEAEQNQRRQRKRPKTNQRFGNKR. Over residues 473–489 the composition is skewed to basic residues; it reads RRQRKRPKTNQRFGNKR.

Belongs to the ThrE exporter (TC 2.A.79) family.

Its subcellular location is the cell membrane. The catalysed reaction is L-threonine(in) + H(+)(out) = L-threonine(out) + H(+)(in). Transport is inhibited by the proton ionophore carbonyl cyanide m-chlorophenylhydrazone (CCCP). Functionally, catalyzes the export of L-threonine and L-serine from the cell to the extracellular environment. Export is dependent on the proton motive force. In Corynebacterium glutamicum (Brevibacterium saccharolyticum), this protein is Threonine/serine exporter.